Reading from the N-terminus, the 174-residue chain is Nucleoside-triphosphatase THEP1 (174 aa).

ATP is bound by residues 8–15 and 99–106; these read GIPGIGKS and LIVIDEVG.

It belongs to the THEP1 NTPase family.

It catalyses the reaction a ribonucleoside 5'-triphosphate + H2O = a ribonucleoside 5'-diphosphate + phosphate + H(+). Functionally, has nucleotide phosphatase activity towards ATP, GTP, CTP, TTP and UTP. May hydrolyze nucleoside diphosphates with lower efficiency. The sequence is that of Nucleoside-triphosphatase THEP1 from Methanosarcina barkeri (strain Fusaro / DSM 804).